Consider the following 304-residue polypeptide: Putative dihydroorotate dehydrogenase A (fumarate) (304 aa).

Residues S22 and 46–47 each bind FMN; that span reads KG. Residues K46 and 70–74 contribute to the substrate site; that span reads NSVGL. FMN-binding residues include N100 and N128. N128 is a binding site for substrate. C131 acts as the Nucleophile in catalysis. Residues K166 and V192 each contribute to the FMN site. 193 to 194 is a substrate binding site; that stretch reads NT. FMN-binding positions include G218, 244–245, and 266–267; these read GG and GT.

It belongs to the dihydroorotate dehydrogenase family. Type 1 subfamily. In terms of assembly, homodimer. FMN serves as cofactor.

It is found in the cytoplasm. It catalyses the reaction (S)-dihydroorotate + fumarate = orotate + succinate. It participates in pyrimidine metabolism; UMP biosynthesis via de novo pathway. Functionally, catalyzes the conversion of dihydroorotate to orotate with fumarate as the electron acceptor. The protein is Putative dihydroorotate dehydrogenase A (fumarate) (pyrD) of Solibacter usitatus (strain Ellin6076).